A 747-amino-acid chain; its full sequence is DNA repair and recombination protein RAD54-like (747 aa).

The disordered stretch occupies residues 1 to 42; it reads MRRSLAPSQLARRKPEDRSSDDEDWQPGTVTPKKRKSSSETQ. The tract at residues 2–9 is required for chromatin remodeling, strand pairing activities and coupling of ATPase activity; it reads RRSLAPSQ. S38 bears the Phosphoserine mark. One can recognise a Helicase ATP-binding domain in the interval 170 to 345; that stretch reads SRRIPGSHGC…FSLVHFVNSG (176 aa). 183–190 contacts ATP; it reads DEMGLGKT. Residues 296–299 carry the DEGH box motif; it reads DEGH. In terms of domain architecture, Helicase C-terminal spans 500–653; it reads VLDYILAVTR…CVVDEEQDVE (154 aa). An N6-acetyllysine modification is found at K515. S572 bears the Phosphoserine; by NEK1 mark.

The protein belongs to the SNF2/RAD54 helicase family. Homohexamer. Interacts (via N-terminus) with RAD51. Interacts with NAP1L1. Interacts with BRD9; this interaction orchestrates RAD51-RAD54 complex formation. Acetylated. Acetylation promotes interaction with BRD9, and subsequently with RAD54, which is essential for homologous recombination (HR). In terms of processing, phosphorylated. Phosphorylation at Ser-572 by NEK1 specifically in G2 phase allows efficient removal of RAD51 filaments from DNA. As to expression, hardly detectable in most tissues. Dramatically increased in thymus, spleen and testis.

Its subcellular location is the nucleus. It catalyses the reaction ATP + H2O = ADP + phosphate + H(+). Plays an essential role in homologous recombination (HR) which is a major pathway for repairing DNA double-strand breaks (DSBs), single-stranded DNA (ssDNA) gaps, and stalled or collapsed replication forks. Acts as a molecular motor during the homology search and guides RAD51 ssDNA along a donor dsDNA thereby changing the homology search from the diffusion-based mechanism to a motor-guided mechanism. Plays also an essential role in RAD51-mediated synaptic complex formation which consists of three strands encased in a protein filament formed once homology is recognized. Once DNA strand exchange occured, dissociates RAD51 from nucleoprotein filaments formed on dsDNA. Deficiency also resulted in an increased frequency of end-to-end chromosome fusions involving telomeres compared to the controls, suggesting a putative role in telomere capping. Non-homologous end joining (NHEJ) and homologous recombination (HR) represent the two major pathways of DNA double-strand break (DSB) repair in eukaryotic cells. LIG4 and RAD54L cooperate to support cellular proliferation, repair spontaneous DSBs, and prevent chromosome and single chromatid aberrations. This chain is DNA repair and recombination protein RAD54-like (Rad54l), found in Mus musculus (Mouse).